A 130-amino-acid chain; its full sequence is Protein ApaG (130 aa).

One can recognise an ApaG domain in the interval 3–127; it reads RAVTRHIEVT…FSLDSPDGKR (125 aa).

This is Protein ApaG from Bradyrhizobium sp. (strain ORS 278).